We begin with the raw amino-acid sequence, 95 residues long: Exodeoxyribonuclease 7 small subunit (95 aa).

The tract at residues glutamate 65–serine 95 is disordered.

This sequence belongs to the XseB family. Heterooligomer composed of large and small subunits.

It localises to the cytoplasm. The catalysed reaction is Exonucleolytic cleavage in either 5'- to 3'- or 3'- to 5'-direction to yield nucleoside 5'-phosphates.. Bidirectionally degrades single-stranded DNA into large acid-insoluble oligonucleotides, which are then degraded further into small acid-soluble oligonucleotides. The polypeptide is Exodeoxyribonuclease 7 small subunit (Chlorobaculum tepidum (strain ATCC 49652 / DSM 12025 / NBRC 103806 / TLS) (Chlorobium tepidum)).